Consider the following 589-residue polypeptide: Nicotinate phosphoribosyltransferase (589 aa).

The disordered stretch occupies residues 1-30; that stretch reads MSQSNTPLKRKKTENGYSENGSTTGATSNQ. Residues 15–30 are compositionally biased toward polar residues; it reads NGYSENGSTTGATSNQ. Nicotinate contacts are provided by Tyr68 and Thr256. At His259 the chain carries Phosphohistidine. Arg356 serves as a coordination point for nicotinate. Thr418 lines the 5-phospho-alpha-D-ribose 1-diphosphate pocket.

The protein belongs to the NAPRTase family. Mg(2+) serves as cofactor. The cofactor is Mn(2+). In terms of processing, transiently phosphorylated on a His residue during the reaction cycle. Phosphorylation strongly increases the affinity for substrates and increases the rate of nicotinate D-ribonucleotide production. Dephosphorylation regenerates the low-affinity form of the enzyme, leading to product release.

It carries out the reaction nicotinate + 5-phospho-alpha-D-ribose 1-diphosphate + ATP + H2O = nicotinate beta-D-ribonucleotide + ADP + phosphate + diphosphate. The protein operates within cofactor biosynthesis; NAD(+) biosynthesis; nicotinate D-ribonucleotide from nicotinate: step 1/1. In terms of biological role, catalyzes the first step in the biosynthesis of NAD from nicotinic acid, the ATP-dependent synthesis of beta-nicotinate D-ribonucleotide from nicotinate and 5-phospho-D-ribose 1-phosphate. Helps prevent cellular oxidative stress via its role in NAD biosynthesis. The protein is Nicotinate phosphoribosyltransferase (naprt) of Dictyostelium discoideum (Social amoeba).